Here is a 469-residue protein sequence, read N- to C-terminus: Ribulose bisphosphate carboxylase large chain (469 aa).

The propeptide occupies 1 to 2; that stretch reads MS. Proline 3 is modified (N-acetylproline). Residue lysine 14 is modified to N6,N6,N6-trimethyllysine. The substrate site is built by asparagine 123 and threonine 173. Lysine 175 (proton acceptor) is an active-site residue. Residue lysine 177 coordinates substrate. 3 residues coordinate Mg(2+): lysine 201, aspartate 203, and glutamate 204. Lysine 201 is modified (N6-carboxylysine). The Proton acceptor role is filled by histidine 294. 3 residues coordinate substrate: arginine 295, histidine 327, and serine 379.

It belongs to the RuBisCO large chain family. Type I subfamily. In terms of assembly, heterohexadecamer of 8 large chains and 8 small chains; disulfide-linked. The disulfide link is formed within the large subunit homodimers. It depends on Mg(2+) as a cofactor. The disulfide bond which can form in the large chain dimeric partners within the hexadecamer appears to be associated with oxidative stress and protein turnover.

The protein resides in the plastid. The protein localises to the chloroplast. It carries out the reaction 2 (2R)-3-phosphoglycerate + 2 H(+) = D-ribulose 1,5-bisphosphate + CO2 + H2O. The enzyme catalyses D-ribulose 1,5-bisphosphate + O2 = 2-phosphoglycolate + (2R)-3-phosphoglycerate + 2 H(+). Its function is as follows. RuBisCO catalyzes two reactions: the carboxylation of D-ribulose 1,5-bisphosphate, the primary event in carbon dioxide fixation, as well as the oxidative fragmentation of the pentose substrate in the photorespiration process. Both reactions occur simultaneously and in competition at the same active site. The sequence is that of Ribulose bisphosphate carboxylase large chain from Iris ensata (Japanese iris).